The chain runs to 428 residues: Serine--tRNA ligase (428 aa).

235 to 237 provides a ligand contact to L-serine; sequence TAE. ATP is bound at residue 266–268; sequence RSE. Glutamate 289 is a binding site for L-serine. An ATP-binding site is contributed by 353–356; sequence EISS. Serine 389 contacts L-serine.

Belongs to the class-II aminoacyl-tRNA synthetase family. Type-1 seryl-tRNA synthetase subfamily. As to quaternary structure, homodimer. The tRNA molecule binds across the dimer.

The protein resides in the cytoplasm. The catalysed reaction is tRNA(Ser) + L-serine + ATP = L-seryl-tRNA(Ser) + AMP + diphosphate + H(+). The enzyme catalyses tRNA(Sec) + L-serine + ATP = L-seryl-tRNA(Sec) + AMP + diphosphate + H(+). The protein operates within aminoacyl-tRNA biosynthesis; selenocysteinyl-tRNA(Sec) biosynthesis; L-seryl-tRNA(Sec) from L-serine and tRNA(Sec): step 1/1. Its function is as follows. Catalyzes the attachment of serine to tRNA(Ser). Is also able to aminoacylate tRNA(Sec) with serine, to form the misacylated tRNA L-seryl-tRNA(Sec), which will be further converted into selenocysteinyl-tRNA(Sec). The sequence is that of Serine--tRNA ligase from Shewanella oneidensis (strain ATCC 700550 / JCM 31522 / CIP 106686 / LMG 19005 / NCIMB 14063 / MR-1).